Here is a 132-residue protein sequence, read N- to C-terminus: MSKDTIADIITSIRNADMDKKGTVRIASTNITENIIKILLREGFIENVRKHRENNKYLLILTLRHRRNRKGTYRNILKCISRPGLRIYSNYKRIPRILGGIGIVILSTSRGIMTDREARLKGIGGEILCYIW.

The protein belongs to the universal ribosomal protein uS8 family. As to quaternary structure, part of the 30S ribosomal subunit.

It localises to the plastid. Its subcellular location is the chloroplast. One of the primary rRNA binding proteins, it binds directly to 16S rRNA central domain where it helps coordinate assembly of the platform of the 30S subunit. This chain is Small ribosomal subunit protein uS8c (rps8), found in Drimys granadensis.